Reading from the N-terminus, the 209-residue chain is Thiamine-phosphate synthase 1 (209 aa).

4-amino-2-methyl-5-(diphosphooxymethyl)pyrimidine contacts are provided by residues 39-43 (QFREK) and Asn-74. Positions 75 and 94 each coordinate Mg(2+). Ser-112 is a binding site for 4-amino-2-methyl-5-(diphosphooxymethyl)pyrimidine. 138–140 (TQS) contacts 2-[(2R,5Z)-2-carboxy-4-methylthiazol-5(2H)-ylidene]ethyl phosphate. Residue Lys-141 coordinates 4-amino-2-methyl-5-(diphosphooxymethyl)pyrimidine. 2-[(2R,5Z)-2-carboxy-4-methylthiazol-5(2H)-ylidene]ethyl phosphate-binding positions include Gly-170 and 190–191 (IS).

The protein belongs to the thiamine-phosphate synthase family. Mg(2+) is required as a cofactor.

The catalysed reaction is 2-[(2R,5Z)-2-carboxy-4-methylthiazol-5(2H)-ylidene]ethyl phosphate + 4-amino-2-methyl-5-(diphosphooxymethyl)pyrimidine + 2 H(+) = thiamine phosphate + CO2 + diphosphate. It carries out the reaction 2-(2-carboxy-4-methylthiazol-5-yl)ethyl phosphate + 4-amino-2-methyl-5-(diphosphooxymethyl)pyrimidine + 2 H(+) = thiamine phosphate + CO2 + diphosphate. It catalyses the reaction 4-methyl-5-(2-phosphooxyethyl)-thiazole + 4-amino-2-methyl-5-(diphosphooxymethyl)pyrimidine + H(+) = thiamine phosphate + diphosphate. The protein operates within cofactor biosynthesis; thiamine diphosphate biosynthesis; thiamine phosphate from 4-amino-2-methyl-5-diphosphomethylpyrimidine and 4-methyl-5-(2-phosphoethyl)-thiazole: step 1/1. Condenses 4-methyl-5-(beta-hydroxyethyl)thiazole monophosphate (THZ-P) and 2-methyl-4-amino-5-hydroxymethyl pyrimidine pyrophosphate (HMP-PP) to form thiamine monophosphate (TMP). The polypeptide is Thiamine-phosphate synthase 1 (Streptococcus pneumoniae (strain ATCC BAA-255 / R6)).